Here is a 465-residue protein sequence, read N- to C-terminus: ATP synthase subunit beta (465 aa).

An ATP-binding site is contributed by Gly153 to Thr160.

This sequence belongs to the ATPase alpha/beta chains family. F-type ATPases have 2 components, CF(1) - the catalytic core - and CF(0) - the membrane proton channel. CF(1) has five subunits: alpha(3), beta(3), gamma(1), delta(1), epsilon(1). CF(0) has three main subunits: a(1), b(2) and c(9-12). The alpha and beta chains form an alternating ring which encloses part of the gamma chain. CF(1) is attached to CF(0) by a central stalk formed by the gamma and epsilon chains, while a peripheral stalk is formed by the delta and b chains.

Its subcellular location is the cell membrane. The catalysed reaction is ATP + H2O + 4 H(+)(in) = ADP + phosphate + 5 H(+)(out). In terms of biological role, produces ATP from ADP in the presence of a proton gradient across the membrane. The catalytic sites are hosted primarily by the beta subunits. In Clostridium perfringens (strain SM101 / Type A), this protein is ATP synthase subunit beta.